The primary structure comprises 515 residues: Bifunctional purine biosynthesis protein PurH (515 aa).

An MGS-like domain is found at 1 to 145 (MTKRALISVS…KNHASVTVVV (145 aa)).

This sequence belongs to the PurH family.

It carries out the reaction (6R)-10-formyltetrahydrofolate + 5-amino-1-(5-phospho-beta-D-ribosyl)imidazole-4-carboxamide = 5-formamido-1-(5-phospho-D-ribosyl)imidazole-4-carboxamide + (6S)-5,6,7,8-tetrahydrofolate. The catalysed reaction is IMP + H2O = 5-formamido-1-(5-phospho-D-ribosyl)imidazole-4-carboxamide. It functions in the pathway purine metabolism; IMP biosynthesis via de novo pathway; 5-formamido-1-(5-phospho-D-ribosyl)imidazole-4-carboxamide from 5-amino-1-(5-phospho-D-ribosyl)imidazole-4-carboxamide (10-formyl THF route): step 1/1. The protein operates within purine metabolism; IMP biosynthesis via de novo pathway; IMP from 5-formamido-1-(5-phospho-D-ribosyl)imidazole-4-carboxamide: step 1/1. This is Bifunctional purine biosynthesis protein PurH from Streptococcus equi subsp. equi (strain 4047).